The following is a 268-amino-acid chain: 4-hydroxy-tetrahydrodipicolinate reductase (268 aa).

NAD(+) is bound at residue 9-14 (GCSGRM). Arg36 contributes to the NADP(+) binding site. Residues 98–100 (GTT) and 122–125 (APNT) each bind NAD(+). His155 serves as the catalytic Proton donor/acceptor. Position 156 (His156) interacts with (S)-2,3,4,5-tetrahydrodipicolinate. Residue Lys159 is the Proton donor of the active site. 165–166 (GT) lines the (S)-2,3,4,5-tetrahydrodipicolinate pocket.

This sequence belongs to the DapB family.

It is found in the cytoplasm. It carries out the reaction (S)-2,3,4,5-tetrahydrodipicolinate + NAD(+) + H2O = (2S,4S)-4-hydroxy-2,3,4,5-tetrahydrodipicolinate + NADH + H(+). The enzyme catalyses (S)-2,3,4,5-tetrahydrodipicolinate + NADP(+) + H2O = (2S,4S)-4-hydroxy-2,3,4,5-tetrahydrodipicolinate + NADPH + H(+). The protein operates within amino-acid biosynthesis; L-lysine biosynthesis via DAP pathway; (S)-tetrahydrodipicolinate from L-aspartate: step 4/4. In terms of biological role, catalyzes the conversion of 4-hydroxy-tetrahydrodipicolinate (HTPA) to tetrahydrodipicolinate. This is 4-hydroxy-tetrahydrodipicolinate reductase from Colwellia psychrerythraea (strain 34H / ATCC BAA-681) (Vibrio psychroerythus).